A 905-amino-acid polypeptide reads, in one-letter code: Alanine--tRNA ligase (905 aa).

Zn(2+) contacts are provided by His-595, His-599, Cys-696, and His-700.

The protein belongs to the class-II aminoacyl-tRNA synthetase family. Zn(2+) serves as cofactor.

The protein localises to the cytoplasm. The catalysed reaction is tRNA(Ala) + L-alanine + ATP = L-alanyl-tRNA(Ala) + AMP + diphosphate. Its function is as follows. Catalyzes the attachment of alanine to tRNA(Ala) in a two-step reaction: alanine is first activated by ATP to form Ala-AMP and then transferred to the acceptor end of tRNA(Ala). Also edits incorrectly charged Ser-tRNA(Ala) and Gly-tRNA(Ala) via its editing domain. The chain is Alanine--tRNA ligase from Anaeromyxobacter dehalogenans (strain 2CP-C).